The following is a 70-amino-acid chain: DNA gyrase inhibitor YacG (70 aa).

Zn(2+) is bound by residues cysteine 21, cysteine 24, cysteine 36, and cysteine 40.

This sequence belongs to the DNA gyrase inhibitor YacG family. In terms of assembly, interacts with GyrB. The cofactor is Zn(2+).

Inhibits all the catalytic activities of DNA gyrase by preventing its interaction with DNA. Acts by binding directly to the C-terminal domain of GyrB, which probably disrupts DNA binding by the gyrase. This chain is DNA gyrase inhibitor YacG, found in Rhizobium meliloti (strain 1021) (Ensifer meliloti).